The primary structure comprises 124 residues: Fluoride-specific ion channel FluC (124 aa).

4 consecutive transmembrane segments (helical) span residues isoleucine 3–tryptophan 23, tyrosine 34–alanine 54, leucine 66–threonine 86, and leucine 100–alanine 120. 2 residues coordinate Na(+): glycine 74 and threonine 77.

It belongs to the fluoride channel Fluc/FEX (TC 1.A.43) family.

The protein resides in the cell membrane. It carries out the reaction fluoride(in) = fluoride(out). With respect to regulation, na(+) is not transported, but it plays an essential structural role and its presence is essential for fluoride channel function. Fluoride-specific ion channel. Important for reducing fluoride concentration in the cell, thus reducing its toxicity. The chain is Fluoride-specific ion channel FluC from Roseiflexus sp. (strain RS-1).